A 714-amino-acid chain; its full sequence is Fumarate reductase flavoprotein subunit (714 aa).

Residues 13-16, 42-44, and 49-50 contribute to the FAD site; these read GGLA, SHS, and GG. At H43 the chain carries Tele-8alpha-FAD histidine. Catalysis depends on residues H257 and R273. Residues E420 and 436–437 contribute to the FAD site; that span reads SV.

This sequence belongs to the FAD-dependent oxidoreductase 2 family. FRD/SDH subfamily. As to quaternary structure, part of an enzyme complex containing three subunits: a flavoprotein (frdA), an iron-sulfur protein (frdB), and diheme cytochrome b (frdC). FAD is required as a cofactor.

It is found in the cell inner membrane. The enzyme catalyses a quinone + succinate = fumarate + a quinol. In terms of biological role, the fumarate reductase enzyme complex is required for fumarate respiration. The protein is Fumarate reductase flavoprotein subunit (frdA) of Helicobacter pylori (strain J99 / ATCC 700824) (Campylobacter pylori J99).